The following is a 25-amino-acid chain: Small ribosomal subunit protein eS32A (25 aa).

Residues 1–25 (MRDKWRKKRVRRLKRKRRKMRARSK) are disordered.

Belongs to the eukaryotic ribosomal protein eS32 family. As to quaternary structure, component of the large ribosomal subunit (LSU). Mature yeast ribosomes consist of a small (40S) and a large (60S) subunit. The 40S small subunit contains 1 molecule of ribosomal RNA (18S rRNA) and at least 33 different proteins. The large 60S subunit contains 3 rRNA molecules (25S, 5.8S and 5S rRNA) and at least 46 different proteins.

Its subcellular location is the cytoplasm. It is found in the nucleus. Its function is as follows. Component of the ribosome, a large ribonucleoprotein complex responsible for the synthesis of proteins in the cell. The small ribosomal subunit (SSU) binds messenger RNAs (mRNAs) and translates the encoded message by selecting cognate aminoacyl-transfer RNA (tRNA) molecules. The large subunit (LSU) contains the ribosomal catalytic site termed the peptidyl transferase center (PTC), which catalyzes the formation of peptide bonds, thereby polymerizing the amino acids delivered by tRNAs into a polypeptide chain. The nascent polypeptides leave the ribosome through a tunnel in the LSU and interact with protein factors that function in enzymatic processing, targeting, and the membrane insertion of nascent chains at the exit of the ribosomal tunnel. The protein is Small ribosomal subunit protein eS32A (rpl4101) of Schizosaccharomyces pombe (strain 972 / ATCC 24843) (Fission yeast).